Consider the following 163-residue polypeptide: MTVLTIEEMAETLAPRQAIAGLDLGTKTIGLSMSDLGRRFATPRPVIRRVKFTIDAQALMDFATAEKVAGFVIGLPMNMDGSAGPRVQATRAFVRNMEQKTALPFVYWDERLSTVAAERTLLEMDVSRAKRAERIDSAAASFILQGALDRLSLLARSDGDEFS.

The protein belongs to the YqgF nuclease family.

The protein localises to the cytoplasm. Its function is as follows. Could be a nuclease involved in processing of the 5'-end of pre-16S rRNA. The protein is Putative pre-16S rRNA nuclease of Rhizobium leguminosarum bv. trifolii (strain WSM2304).